The primary structure comprises 336 residues: tRNA N6-adenosine threonylcarbamoyltransferase (336 aa).

Fe cation is bound by residues H111, H115, and Y132. Substrate contacts are provided by residues 132 to 136 (YLSGG), D164, D185, and S264. Residue D292 participates in Fe cation binding.

It belongs to the KAE1 / TsaD family. Fe(2+) is required as a cofactor.

Its subcellular location is the cytoplasm. It carries out the reaction L-threonylcarbamoyladenylate + adenosine(37) in tRNA = N(6)-L-threonylcarbamoyladenosine(37) in tRNA + AMP + H(+). Its function is as follows. Required for the formation of a threonylcarbamoyl group on adenosine at position 37 (t(6)A37) in tRNAs that read codons beginning with adenine. Is probably involved in the transfer of the threonylcarbamoyl moiety of threonylcarbamoyl-AMP (TC-AMP) to the N6 group of A37. The protein is tRNA N6-adenosine threonylcarbamoyltransferase of Sulfurisphaera tokodaii (strain DSM 16993 / JCM 10545 / NBRC 100140 / 7) (Sulfolobus tokodaii).